We begin with the raw amino-acid sequence, 591 residues long: Max-binding protein MNT (591 aa).

Position 2 is an N-acetylserine (S2). Disordered regions lie at residues 17–122 (AQQQ…APRQ) and 182–223 (PGVQ…GIGT). A compositionally biased stretch (basic and acidic residues) spans 22-44 (RAREEQERLRLEREREREQEQKR). 2 stretches are compositionally biased toward pro residues: residues 63–84 (EAPP…PLAT) and 102–120 (SLPP…PLAP). Basic and acidic residues predominate over residues 205-216 (PAEEAKSSEQKK). The bHLH domain maps to 222–273 (GTREVHNKLEKNRRAHLKECFETLKRNIPNVDDKKTSNLSVLRTALRYIQSL). Positions 273-301 (LKRKEKEYEHEMERLAREKIATQQRLAEL) are leucine-zipper. Residues 321-426 (TGQPEDDQAS…PPPATPTQTL (106 aa)) are disordered. Residues 336-346 (EGEDNVDEEME) show a composition bias toward acidic residues. Residues 374-383 (STAPAPLPTH) show a composition bias toward pro residues. The segment covering 390 to 411 (PVALSPAHLPVQQQQPPQQKTP) has biased composition (low complexity). Residues 412–421 (LPAPPPPPAT) show a composition bias toward pro residues.

Efficient DNA binding requires dimerization with another bHLH protein. Binds DNA as a homodimer or a heterodimer with MAX.

The protein localises to the nucleus. Its function is as follows. Binds DNA as a heterodimer with MAX and represses transcription. Binds to the canonical E box sequence 5'-CACGTG-3' and, with higher affinity, to 5'-CACGCG-3'. This chain is Max-binding protein MNT (Mnt), found in Mus musculus (Mouse).